We begin with the raw amino-acid sequence, 284 residues long: Bifunctional protein FolD (284 aa).

NADP(+) contacts are provided by residues 165–167 (GRS), serine 190, and valine 231.

It belongs to the tetrahydrofolate dehydrogenase/cyclohydrolase family. In terms of assembly, homodimer.

It catalyses the reaction (6R)-5,10-methylene-5,6,7,8-tetrahydrofolate + NADP(+) = (6R)-5,10-methenyltetrahydrofolate + NADPH. The enzyme catalyses (6R)-5,10-methenyltetrahydrofolate + H2O = (6R)-10-formyltetrahydrofolate + H(+). It functions in the pathway one-carbon metabolism; tetrahydrofolate interconversion. Catalyzes the oxidation of 5,10-methylenetetrahydrofolate to 5,10-methenyltetrahydrofolate and then the hydrolysis of 5,10-methenyltetrahydrofolate to 10-formyltetrahydrofolate. The protein is Bifunctional protein FolD of Natranaerobius thermophilus (strain ATCC BAA-1301 / DSM 18059 / JW/NM-WN-LF).